Reading from the N-terminus, the 180-residue chain is Tubulin polymerization-promoting protein homolog (180 aa).

Composition is skewed to basic and acidic residues over residues 136–158 and 169–180; these read TGAH…RADT and KNKDSYDKTHGK. The tract at residues 136–180 is disordered; it reads TGAHKERFDAEGKGKGKSGRADTTENTGYVGAYKNKDSYDKTHGK.

Belongs to the TPPP family.

Functionally, regulator of microtubule dynamics. The sequence is that of Tubulin polymerization-promoting protein homolog from Caenorhabditis elegans.